A 1483-amino-acid polypeptide reads, in one-letter code: Heme-responsive zinc finger transcription factor HAP1 (1483 aa).

The segment covering 1–50 has biased composition (polar residues); sequence MSNTPYNSSVPSIASMTQSSVSRSPNMHTATTPGANTSSNSPPLHMSSDS. Residues 1–56 form a disordered region; sequence MSNTPYNSSVPSIASMTQSSVSRSPNMHTATTPGANTSSNSPPLHMSSDSSKIKRK. Residues Cys64, Cys67, Cys74, Cys81, Cys84, and Cys93 each coordinate Zn(2+). The segment at residues 64–93 is a DNA-binding region (zn(2)-C6 fungal-type); sequence CTICRKRKVKCDKLRPHCQQCTKTGVAHLC. A coiled-coil region spans residues 105–134; sequence EKELLKDNELKKLRERVKSLEKTLSKVHSS. The interval 126–208 is disordered; it reads KTLSKVHSSP…ANSSSLSISN (83 aa). The span at 130–142 shows a compositional bias: low complexity; it reads KVHSSPSSNSLKS. Composition is skewed to polar residues over residues 143 to 152 and 160 to 176; these read YNTPESSNLF and TLVNANTGSASSASHMH. A compositionally biased stretch (low complexity) spans 177-208; that stretch reads QQQQQQQQQEQQQDFSRSANANANSSSLSISN. The tract at residues 244 to 444 is heme-responsive; required for HMC formation; that stretch reads KGDPYLKLLW…NTIPHHQPQS (201 aa). HRM repeat units lie at residues 280–285, 299–304, 323–328, 347–352, 389–394, and 415–420; these read KCPINH, KCPVDH, RCPVDH, and RCPIDH. Polar residues-rich tracts occupy residues 432-447 and 706-734; these read STHNTIPHHQPQSGSH and QLNATIPATSQDVSNNGSKKANPSTNPTL. Disordered regions lie at residues 432-458 and 706-767; these read STHNTIPHHQPQSGSHARSHPAQSRKH and QLNA…KENQ. The segment covering 735-759 has biased composition (low complexity); that stretch reads NNNMSAATTNSSSRSGSADSRSGSN. The stretch at 1192-1197 is one HRM 7 repeat; that stretch reads KCPVYQ. A disordered region spans residues 1384-1411; the sequence is TANTDTSANGSALSTLTSPQGSDLASNS. The segment covering 1388–1411 has biased composition (polar residues); it reads DTSANGSALSTLTSPQGSDLASNS.

In terms of assembly, binds DNA as a homodimer. Interacts with SRO9 and YDJ1. In the absence of heme, binds to at least four cellular proteins, including YDJ1 and SRO9, forming a high-molecular-weight complex (HMC) which results in repression of its activity and dictates its DNA-binding specificity.

The protein localises to the nucleus. Its function is as follows. Regulation of oxygen dependent gene expression. It modulates the expression of Iso-1 (CYP1) and Iso-2 (CYP3) cytochrome c. In response to heme, promotes transcription of genes encoding functions required for respiration, controlling oxidative damage and repression of anaerobic genes. Binds to the sequence 5'-CGGNNNTNNCGG-3'. Is non-functional in terms of iso-1 cytochrome c expression in strain S288c and its derivatives. This chain is Heme-responsive zinc finger transcription factor HAP1 (HAP1), found in Saccharomyces cerevisiae (Baker's yeast).